The chain runs to 444 residues: Phosphoglucosamine mutase (444 aa).

The Phosphoserine intermediate role is filled by serine 102. The Mg(2+) site is built by serine 102, aspartate 241, aspartate 243, and aspartate 245. Residue serine 102 is modified to Phosphoserine.

It belongs to the phosphohexose mutase family. Mg(2+) serves as cofactor. Activated by phosphorylation.

It carries out the reaction alpha-D-glucosamine 1-phosphate = D-glucosamine 6-phosphate. Catalyzes the conversion of glucosamine-6-phosphate to glucosamine-1-phosphate. In Paracidovorax citrulli (strain AAC00-1) (Acidovorax citrulli), this protein is Phosphoglucosamine mutase.